Reading from the N-terminus, the 446-residue chain is tRNA-2-methylthio-N(6)-dimethylallyladenosine synthase (446 aa).

Residues 5–121 (RRFYIQTFGC…LPSLIDDAAS (117 aa)) enclose the MTTase N-terminal domain. 6 residues coordinate [4Fe-4S] cluster: Cys14, Cys50, Cys84, Cys157, Cys161, and Cys164. The Radical SAM core domain occupies 143-373 (REGRISAFIP…IDLQQEISAE (231 aa)). A TRAM domain is found at 376-439 (RRQVGTVAEV…SATLSGSREG (64 aa)).

It belongs to the methylthiotransferase family. MiaB subfamily. Monomer. The cofactor is [4Fe-4S] cluster.

The protein localises to the cytoplasm. It carries out the reaction N(6)-dimethylallyladenosine(37) in tRNA + (sulfur carrier)-SH + AH2 + 2 S-adenosyl-L-methionine = 2-methylsulfanyl-N(6)-dimethylallyladenosine(37) in tRNA + (sulfur carrier)-H + 5'-deoxyadenosine + L-methionine + A + S-adenosyl-L-homocysteine + 2 H(+). Catalyzes the methylthiolation of N6-(dimethylallyl)adenosine (i(6)A), leading to the formation of 2-methylthio-N6-(dimethylallyl)adenosine (ms(2)i(6)A) at position 37 in tRNAs that read codons beginning with uridine. In Chlorobium luteolum (strain DSM 273 / BCRC 81028 / 2530) (Pelodictyon luteolum), this protein is tRNA-2-methylthio-N(6)-dimethylallyladenosine synthase.